The primary structure comprises 549 residues: Zinc finger protein 382 (549 aa).

The segment at 1–105 (MNCHSVPLQG…DKPPTSIVII (105 aa)) is mediates interaction with TRIM28. Represses transcription regions lie at residues 10–51 (GPVS…FISV) and 75–210 (MFPS…PEQR). Positions 12 to 83 (VSFKDVTVDF…RMFPSQSYLE (72 aa)) constitute a KRAB domain. C2H2-type zinc fingers lie at residues 211 to 233 (FECD…DRAH), 295 to 317 (FQCP…QRIH), 323 to 345 (YICS…EKTH), 351 to 373 (YLCV…HKTH), 379 to 401 (YECT…QRTH), 407 to 429 (YQCA…QRTH), 435 to 457 (YMCS…QRIH), 463 to 485 (YVCS…YRIH), 491 to 513 (NGCP…QKTH), and 519 to 541 (YECH…QKTH). The segment at 295–549 (FQCPYCGNSF…THKAETVRFQ (255 aa)) is required for transcriptional repression activity; probably mediates sequence-specific DNA-binding.

This sequence belongs to the krueppel C2H2-type zinc-finger protein family. In terms of assembly, interacts with TRIM28; enhances the transcriptional repressor activity. As to expression, ubiquitously expressed with higher expression in lung, kidney and testis.

Its subcellular location is the nucleus. In terms of biological role, functions as a sequence-specific transcriptional repressor. The sequence is that of Zinc finger protein 382 (Znf382) from Rattus norvegicus (Rat).